Reading from the N-terminus, the 158-residue chain is uncharacterized protein (158 aa).

In terms of domain architecture, HTH asnC-type spans 12-73; sequence LDEIDRAILR…LINPFKAGYE (62 aa). Residues 31–50 constitute a DNA-binding region (H-T-H motif); it reads YSEISRRINVPESTVRARVN.

This is an uncharacterized protein from Pyrococcus horikoshii (strain ATCC 700860 / DSM 12428 / JCM 9974 / NBRC 100139 / OT-3).